Consider the following 1224-residue polypeptide: WD repeat-containing protein 11 (1224 aa).

WD repeat units follow at residues 59–108 (KHKA…AQCE) and 111–154 (EHAK…KLWK). Phosphoserine occurs at positions 205 and 209. The WD 3 repeat unit spans residues 354-393 (KTVRPFSMVCCPVNENAAALVVSDGRVMIWELKSAVCNRN). Phosphoserine is present on residues Ser-402 and Ser-406. 6 WD repeats span residues 471–510 (RMCP…LHKE), 566–605 (NDES…LLRE), 708–745 (GSMG…SRGI), 747–787 (THRS…MVSS), 793–831 (NVTF…ACFR), and 893–940 (SLSN…HSLS).

In terms of assembly, component of the complex WDR11 composed of C17orf75, FAM91A1 and WDR11; FAM91A1 and WDR11 are required for proper location of the complex. Interacts (via the N-terminal and the central portion of the protein) with EMX1. Interacts with GLI3; the interaction associateS EMX1 with GLI3. Interacts with TBC1D23; this interaction may be indirect and recruits TBC1D23 to AP-1-derived vesicles. As to expression, ubiquitous.

The protein localises to the cytoplasm. It localises to the cytoskeleton. The protein resides in the cilium basal body. It is found in the nucleus. Its subcellular location is the cilium axoneme. The protein localises to the cytoplasmic vesicle. It localises to the golgi apparatus. The protein resides in the trans-Golgi network. Functionally, involved in the Hedgehog (Hh) signaling pathway, is essential for normal ciliogenesis. Regulates the proteolytic processing of GLI3 and cooperates with the transcription factor EMX1 in the induction of downstream Hh pathway gene expression and gonadotropin-releasing hormone production. WDR11 complex facilitates the tethering of Adaptor protein-1 complex (AP-1)-derived vesicles. WDR11 complex acts together with TBC1D23 to facilitate the golgin-mediated capture of vesicles generated using AP-1. The protein is WD repeat-containing protein 11 (WDR11) of Homo sapiens (Human).